The primary structure comprises 294 residues: Ribosomal RNA small subunit methyltransferase H (294 aa).

S-adenosyl-L-methionine-binding positions include 37-39, aspartate 58, leucine 93, aspartate 105, and glutamine 112; that span reads GGH.

This sequence belongs to the methyltransferase superfamily. RsmH family.

The protein resides in the cytoplasm. The enzyme catalyses cytidine(1402) in 16S rRNA + S-adenosyl-L-methionine = N(4)-methylcytidine(1402) in 16S rRNA + S-adenosyl-L-homocysteine + H(+). In terms of biological role, specifically methylates the N4 position of cytidine in position 1402 (C1402) of 16S rRNA. This chain is Ribosomal RNA small subunit methyltransferase H, found in Fervidobacterium nodosum (strain ATCC 35602 / DSM 5306 / Rt17-B1).